Here is a 215-residue protein sequence, read N- to C-terminus: Hibernation-associated plasma protein HP-27 (215 aa).

Positions 1–30 (MYEAGKRASFMGGAGIWILALSVLMHVVCS) are cleaved as a signal peptide. Residues 34-79 (GNPESCNVPGPQGPPGMRGPPGTPGKPGPPGWNGFPGLPGPPGPPG) form a disordered region. Positions 43-81 (GPQGPPGMRGPPGTPGKPGPPGWNGFPGLPGPPGPPGMT) constitute a Collagen-like domain. A compositionally biased stretch (pro residues) spans 44–63 (PQGPPGMRGPPGTPGKPGPP). In terms of domain architecture, C1q spans 85–215 (HSKGTSAFAV…VFSGFLIHEN (131 aa)). Asparagine 155 carries N-linked (GlcNAc...) asparagine glycosylation.

In terms of tissue distribution, plasma; synthesized in the liver.

The protein resides in the secreted. In terms of biological role, plasma proteins HP-20, HP-25, HP-27 and HP-55 form a 140 kDa complex via disulfide bonds in the plasma and are hibernation specific. The chain is Hibernation-associated plasma protein HP-27 from Tamias sibiricus (Siberian chipmunk).